Consider the following 647-residue polypeptide: Starch synthase 1, chloroplastic/amyloplastic (647 aa).

The N-terminal 41 residues, 1–41 (MAATGVGAGCLAPSVRLRADPATAARASACVVRARLRRVAR), are a transit peptide targeting the chloroplast. Pro residues predominate over residues 66–91 (PLVPGFLAPPPPAPAQSPAPTQPPLP). Positions 66–95 (PLVPGFLAPPPPAPAQSPAPTQPPLPDAGV) are disordered. ADP-alpha-D-glucose is bound at residue Lys-153.

The protein belongs to the glycosyltransferase 1 family. Bacterial/plant glycogen synthase subfamily.

It localises to the plastid. The protein resides in the chloroplast. It is found in the amyloplast. The catalysed reaction is [(1-&gt;4)-alpha-D-glucosyl](n) + ADP-alpha-D-glucose = [(1-&gt;4)-alpha-D-glucosyl](n+1) + ADP + H(+). Its pathway is glycan biosynthesis; starch biosynthesis. This is Starch synthase 1, chloroplastic/amyloplastic (WSSI-2) from Triticum aestivum (Wheat).